The chain runs to 432 residues: Ciliated left-right organizer protein containing ZP-N domains homolog (432 aa).

As to expression, expressed specifically by cells of the ciliated left-right organizer.

This is Ciliated left-right organizer protein containing ZP-N domains homolog (ciroz) from Danio rerio (Zebrafish).